A 302-amino-acid polypeptide reads, in one-letter code: Proline dehydrogenase 1 (302 aa).

Residue lysine 95 coordinates substrate. The active site involves aspartate 129. Residues methionine 130 and glutamine 158 each contribute to the FAD site. Residue arginine 179 is part of the active site. FAD contacts are provided by residues 182-184 (KGA) and 221-222 (TH). 283–284 (RR) provides a ligand contact to substrate.

Belongs to the proline oxidase family. Requires FAD as cofactor.

The enzyme catalyses L-proline + a quinone = (S)-1-pyrroline-5-carboxylate + a quinol + H(+). The protein operates within amino-acid degradation; L-proline degradation into L-glutamate; L-glutamate from L-proline: step 1/2. Converts proline to delta-1-pyrroline-5-carboxylate. The sequence is that of Proline dehydrogenase 1 (fadM) from Bacillus subtilis subsp. natto.